The primary structure comprises 193 residues: Ion-translocating oxidoreductase complex subunit A (193 aa).

The next 6 membrane-spanning stretches (helical) occupy residues 5 to 25 (VLLLIGTVLVNNFVLVQFLGL), 39 to 59 (IGMSLATTFVLTLASVTSYLV), 63 to 83 (ILIPLDITYLRTMSFILVIAV), 102 to 122 (LLGIFLPLITTNCAVLGVALL), 134 to 154 (AVYGFGAAVGFSLVLVLFAAL), and 171 to 191 (SIALITAGLMSMAFMGFTGLV).

The protein belongs to the NqrDE/RnfAE family. The complex is composed of six subunits: RnfA, RnfB, RnfC, RnfD, RnfE and RnfG.

The protein resides in the cell inner membrane. Part of a membrane-bound complex that couples electron transfer with translocation of ions across the membrane. The chain is Ion-translocating oxidoreductase complex subunit A from Pseudoalteromonas translucida (strain TAC 125).